Here is an 89-residue protein sequence, read N- to C-terminus: Large ribosomal subunit protein bL27 (89 aa).

The segment at 1-22 (MAHKKAGGSSRNGRDSESKRLG) is disordered.

The protein belongs to the bacterial ribosomal protein bL27 family.

The sequence is that of Large ribosomal subunit protein bL27 from Brucella abortus (strain S19).